Consider the following 83-residue polypeptide: Small ribosomal subunit protein uS17 (83 aa).

This sequence belongs to the universal ribosomal protein uS17 family. In terms of assembly, part of the 30S ribosomal subunit.

Functionally, one of the primary rRNA binding proteins, it binds specifically to the 5'-end of 16S ribosomal RNA. This Chlamydia abortus (strain DSM 27085 / S26/3) (Chlamydophila abortus) protein is Small ribosomal subunit protein uS17.